Here is a 159-residue protein sequence, read N- to C-terminus: 6,7-dimethyl-8-ribityllumazine synthase (159 aa).

5-amino-6-(D-ribitylamino)uracil-binding positions include Trp-28, 59-61 (ALE), and 81-83 (CVI). 86–87 (GT) lines the (2S)-2-hydroxy-3-oxobutyl phosphate pocket. His-89 functions as the Proton donor in the catalytic mechanism. Position 114 (Asn-114) interacts with 5-amino-6-(D-ribitylamino)uracil. Arg-128 is a (2S)-2-hydroxy-3-oxobutyl phosphate binding site.

Belongs to the DMRL synthase family.

It catalyses the reaction (2S)-2-hydroxy-3-oxobutyl phosphate + 5-amino-6-(D-ribitylamino)uracil = 6,7-dimethyl-8-(1-D-ribityl)lumazine + phosphate + 2 H2O + H(+). The protein operates within cofactor biosynthesis; riboflavin biosynthesis; riboflavin from 2-hydroxy-3-oxobutyl phosphate and 5-amino-6-(D-ribitylamino)uracil: step 1/2. Its function is as follows. Catalyzes the formation of 6,7-dimethyl-8-ribityllumazine by condensation of 5-amino-6-(D-ribitylamino)uracil with 3,4-dihydroxy-2-butanone 4-phosphate. This is the penultimate step in the biosynthesis of riboflavin. The chain is 6,7-dimethyl-8-ribityllumazine synthase from Corynebacterium kroppenstedtii (strain DSM 44385 / JCM 11950 / CIP 105744 / CCUG 35717).